Here is a 568-residue protein sequence, read N- to C-terminus: Proline--tRNA ligase (568 aa).

The protein belongs to the class-II aminoacyl-tRNA synthetase family. ProS type 1 subfamily. Homodimer.

It is found in the cytoplasm. The catalysed reaction is tRNA(Pro) + L-proline + ATP = L-prolyl-tRNA(Pro) + AMP + diphosphate. Its function is as follows. Catalyzes the attachment of proline to tRNA(Pro) in a two-step reaction: proline is first activated by ATP to form Pro-AMP and then transferred to the acceptor end of tRNA(Pro). As ProRS can inadvertently accommodate and process non-cognate amino acids such as alanine and cysteine, to avoid such errors it has two additional distinct editing activities against alanine. One activity is designated as 'pretransfer' editing and involves the tRNA(Pro)-independent hydrolysis of activated Ala-AMP. The other activity is designated 'posttransfer' editing and involves deacylation of mischarged Ala-tRNA(Pro). The misacylated Cys-tRNA(Pro) is not edited by ProRS. This Chlamydia pneumoniae (Chlamydophila pneumoniae) protein is Proline--tRNA ligase.